The following is a 471-amino-acid chain: UDP-N-acetylmuramate--L-alanine ligase (471 aa).

114-120 (GTHGKTT) serves as a coordination point for ATP.

It belongs to the MurCDEF family.

It localises to the cytoplasm. The catalysed reaction is UDP-N-acetyl-alpha-D-muramate + L-alanine + ATP = UDP-N-acetyl-alpha-D-muramoyl-L-alanine + ADP + phosphate + H(+). It participates in cell wall biogenesis; peptidoglycan biosynthesis. Its function is as follows. Cell wall formation. In Allorhizobium ampelinum (strain ATCC BAA-846 / DSM 112012 / S4) (Agrobacterium vitis (strain S4)), this protein is UDP-N-acetylmuramate--L-alanine ligase.